Reading from the N-terminus, the 466-residue chain is tRNA modification GTPase MnmE (466 aa).

Positions 23, 86, and 125 each coordinate (6S)-5-formyl-5,6,7,8-tetrahydrofolate. One can recognise a TrmE-type G domain in the interval 221–388; sequence GIPVAIVGEP…LKNELLSFVN (168 aa). Asn231 is a K(+) binding site. Residues 231–236, 250–256, and 275–278 contribute to the GTP site; these read NVGKST, SDIAGTT, and DTAG. Residue Ser235 coordinates Mg(2+). K(+) is bound by residues Ser250, Ile252, and Thr255. Thr256 contributes to the Mg(2+) binding site. A (6S)-5-formyl-5,6,7,8-tetrahydrofolate-binding site is contributed by Lys466.

It belongs to the TRAFAC class TrmE-Era-EngA-EngB-Septin-like GTPase superfamily. TrmE GTPase family. As to quaternary structure, homodimer. Heterotetramer of two MnmE and two MnmG subunits. It depends on K(+) as a cofactor.

It is found in the cytoplasm. Functionally, exhibits a very high intrinsic GTPase hydrolysis rate. Involved in the addition of a carboxymethylaminomethyl (cmnm) group at the wobble position (U34) of certain tRNAs, forming tRNA-cmnm(5)s(2)U34. This Flavobacterium johnsoniae (strain ATCC 17061 / DSM 2064 / JCM 8514 / BCRC 14874 / CCUG 350202 / NBRC 14942 / NCIMB 11054 / UW101) (Cytophaga johnsonae) protein is tRNA modification GTPase MnmE.